Reading from the N-terminus, the 398-residue chain is Stabilizer of axonemal microtubules 2 (398 aa).

Mn regions lie at residues 114–126, 148–162, 248–260, 282–296, 316–328, and 350–364; these read STTF…PQEI, ITSH…QLEL, NSTS…PYQA, KSIM…ESCR, LSTF…PHEL, and VTMY…RQEI.

This sequence belongs to the FAM154 family.

The polypeptide is Stabilizer of axonemal microtubules 2 (SAXO2) (Homo sapiens (Human)).